Consider the following 311-residue polypeptide: Formimidoylglutamase (311 aa).

The Mn(2+) site is built by H127, D152, H154, D156, C236, and D238.

The protein belongs to the arginase family. The cofactor is Mn(2+).

It carries out the reaction N-formimidoyl-L-glutamate + H2O = formamide + L-glutamate. The protein operates within amino-acid degradation; L-histidine degradation into L-glutamate; L-glutamate from N-formimidoyl-L-glutamate (hydrolase route): step 1/1. Its function is as follows. Catalyzes the conversion of N-formimidoyl-L-glutamate to L-glutamate and formamide. The polypeptide is Formimidoylglutamase (Macrococcus caseolyticus (strain JCSC5402) (Macrococcoides caseolyticum)).